The chain runs to 653 residues: Elongation factor 4 (653 aa).

Residues 1-30 (MRTPCSQHRRDRPSAIGSQLPDADTLDTRQ) form a disordered region. A tr-type G domain is found at 50–231 (AQIRNFCIIA…EVVRQVPPPQ (182 aa)). Residues 62–67 (DHGKST) and 178–181 (NKID) contribute to the GTP site.

The protein belongs to the TRAFAC class translation factor GTPase superfamily. Classic translation factor GTPase family. LepA subfamily.

The protein localises to the cell membrane. The enzyme catalyses GTP + H2O = GDP + phosphate + H(+). Functionally, required for accurate and efficient protein synthesis under certain stress conditions. May act as a fidelity factor of the translation reaction, by catalyzing a one-codon backward translocation of tRNAs on improperly translocated ribosomes. Back-translocation proceeds from a post-translocation (POST) complex to a pre-translocation (PRE) complex, thus giving elongation factor G a second chance to translocate the tRNAs correctly. Binds to ribosomes in a GTP-dependent manner. In Mycobacterium bovis (strain ATCC BAA-935 / AF2122/97), this protein is Elongation factor 4.